The primary structure comprises 313 residues: Ribosomal RNA small subunit methyltransferase H (313 aa).

S-adenosyl-L-methionine contacts are provided by residues 35–37 (GGH), Asp55, Phe79, Asp101, and Gln108.

This sequence belongs to the methyltransferase superfamily. RsmH family.

Its subcellular location is the cytoplasm. It catalyses the reaction cytidine(1402) in 16S rRNA + S-adenosyl-L-methionine = N(4)-methylcytidine(1402) in 16S rRNA + S-adenosyl-L-homocysteine + H(+). Specifically methylates the N4 position of cytidine in position 1402 (C1402) of 16S rRNA. The polypeptide is Ribosomal RNA small subunit methyltransferase H (Musicola paradisiaca (strain Ech703) (Dickeya paradisiaca)).